A 210-amino-acid polypeptide reads, in one-letter code: Large ribosomal subunit protein uL3 (210 aa).

Q151 bears the N5-methylglutamine mark.

Belongs to the universal ribosomal protein uL3 family. As to quaternary structure, part of the 50S ribosomal subunit. Forms a cluster with proteins L14 and L19. Methylated by PrmB.

Its function is as follows. One of the primary rRNA binding proteins, it binds directly near the 3'-end of the 23S rRNA, where it nucleates assembly of the 50S subunit. The sequence is that of Large ribosomal subunit protein uL3 from Aeromonas hydrophila subsp. hydrophila (strain ATCC 7966 / DSM 30187 / BCRC 13018 / CCUG 14551 / JCM 1027 / KCTC 2358 / NCIMB 9240 / NCTC 8049).